A 339-amino-acid polypeptide reads, in one-letter code: Spore coat polysaccharide biosynthesis protein SpsG (339 aa).

A helical transmembrane segment spans residues 241–261; that stretch reads IVAGGISLYEAICIGVPCLVL.

The protein to M.jannaschii MJ1062.

The protein localises to the cell membrane. The protein operates within spore coat biogenesis; spore coat polysaccharide biosynthesis. In Bacillus subtilis (strain 168), this protein is Spore coat polysaccharide biosynthesis protein SpsG (spsG).